The following is a 308-amino-acid chain: Ornithine carbamoyltransferase (308 aa).

Carbamoyl phosphate contacts are provided by residues 56–59 (STRT), Gln83, Arg107, and 134–137 (HPCQ). Residues Asn165, Asp225, and 229 to 230 (SM) contribute to the L-ornithine site. Carbamoyl phosphate-binding positions include 264–265 (CL) and Arg292.

The protein belongs to the aspartate/ornithine carbamoyltransferase superfamily. OTCase family.

It localises to the cytoplasm. The enzyme catalyses carbamoyl phosphate + L-ornithine = L-citrulline + phosphate + H(+). It functions in the pathway amino-acid biosynthesis; L-arginine biosynthesis; L-arginine from L-ornithine and carbamoyl phosphate: step 1/3. Reversibly catalyzes the transfer of the carbamoyl group from carbamoyl phosphate (CP) to the N(epsilon) atom of ornithine (ORN) to produce L-citrulline. The chain is Ornithine carbamoyltransferase from Nitrobacter winogradskyi (strain ATCC 25391 / DSM 10237 / CIP 104748 / NCIMB 11846 / Nb-255).